A 143-amino-acid chain; its full sequence is Subtelomeric hrmA-associated cluster protein cgnA (143 aa).

29 G-Q-I/R/S repeats span residues 11–13 (GQI), 14–16 (GPI), 17–19 (GQR), 20–22 (GQS), 23–25 (GQR), 26–28 (GQS), 29–31 (GQR), 32–34 (GQS), 35–37 (GQI), 38–40 (GQS), 41–43 (GQS), 44–46 (GQS), 47–49 (GQI), 50–52 (GQI), 53–55 (GQI), 56–58 (GQI), 59–61 (GQI), 62–64 (GQI), 65–67 (GQI), 68–70 (GQI), 71–73 (GQI), 74–76 (GQI), 77–79 (GQI), 80–82 (GQI), 83–85 (GQI), 86–88 (GQI), 89–91 (GQI), 92–94 (GQI), and 95–97 (GQA). The Collagen-like domain maps to 11 to 68 (GQIGPIGQRGQSGQRGQSGQRGQSGQIGQSGQSGQSGQIGQIGQIGQIGQIGQIGQIG). The interval 11-97 (GQIGPIGQRG…IGQIGQIGQA (87 aa)) is 29 X 3 AA approximate tandem repeats of G-Q-I/R/S. A disordered region spans residues 16-49 (IGQRGQSGQRGQSGQRGQSGQIGQSGQSGQSGQI).

The protein resides in the secreted. Its function is as follows. Collagen-like protein; part of the subtelomeric hrmA-associated cluster (HAC) containing genes that alter the hyphal surface (such as reduced total chitin or increased beta-glucan exposure) and perturb inter-hyphal interactions within the developing biofilms, resulting in a loss of vertically aligned polarized growing filaments. Consequently, this hypoxia-typic morphotype (called H-MORPH) with altered biofilm architecture leads to increased hypoxia fitness, increased host inflammation, rapid disease progression, and mortality in a murine model of invasive aspergillosis. CgnA is directly involved in the reduction of total surface chitin and the increase of beta-glucan exposure, and mediates the detachment of the extracellular matrix and especially of its component galactosaminogalactan (GAG). This chain is Subtelomeric hrmA-associated cluster protein cgnA, found in Aspergillus fumigatus (strain ATCC MYA-4609 / CBS 101355 / FGSC A1100 / Af293) (Neosartorya fumigata).